The primary structure comprises 416 residues: L-cysteine:1D-myo-inositol 2-amino-2-deoxy-alpha-D-glucopyranoside ligase (416 aa).

Zn(2+) is bound at residue Cys-45. Residues 45-48 (CGIT), Thr-60, and 83-85 (NVT) each bind L-cysteinyl-5'-AMP. The short motif at 47 to 57 (ITPYDSTHLGH) is the 'HIGH' region element. Residues 191-196 (ERGGDP) carry the 'ERGGDP' region motif. Trp-232 contributes to the L-cysteinyl-5'-AMP binding site. Residue Cys-236 coordinates Zn(2+). 254-256 (GSD) contributes to the L-cysteinyl-5'-AMP binding site. His-261 lines the Zn(2+) pocket. Val-286 is an L-cysteinyl-5'-AMP binding site. The 'KMSKS' region signature appears at 292 to 296 (KMSKS).

The protein belongs to the class-I aminoacyl-tRNA synthetase family. MshC subfamily. Monomer. The cofactor is Zn(2+).

It carries out the reaction 1D-myo-inositol 2-amino-2-deoxy-alpha-D-glucopyranoside + L-cysteine + ATP = 1D-myo-inositol 2-(L-cysteinylamino)-2-deoxy-alpha-D-glucopyranoside + AMP + diphosphate + H(+). Catalyzes the ATP-dependent condensation of GlcN-Ins and L-cysteine to form L-Cys-GlcN-Ins. This Brachybacterium faecium (strain ATCC 43885 / DSM 4810 / JCM 11609 / LMG 19847 / NBRC 14762 / NCIMB 9860 / 6-10) protein is L-cysteine:1D-myo-inositol 2-amino-2-deoxy-alpha-D-glucopyranoside ligase.